The sequence spans 99 residues: U1-theraphotoxin-Lsp1a (99 aa).

An N-terminal signal peptide occupies residues 1-23 (MRSLTLAALLLCSLLLVFHTSAA). A propeptide spanning residues 24–50 (AELEAQEGHLMIPGDTDTALETVDDER) is cleaved from the precursor. 4 cysteine pairs are disulfide-bonded: Cys-54–Cys-67, Cys-58–Cys-91, Cys-72–Cys-74, and Cys-85–Cys-96.

This sequence belongs to the neurotoxin 12 (Hwtx-2) family. 04 (lasiotoxin) subfamily. In terms of tissue distribution, expressed by the venom gland.

It localises to the secreted. Toxin that causes irreversible contractile paralysis into adult Aedes aegypti resulting in 100% mortality after 24 hours. In Lasiodora sp. (strain IBSP 8539) (Brazilian salmon pink birdeater), this protein is U1-theraphotoxin-Lsp1a.